A 392-amino-acid chain; its full sequence is Chorismate synthase (392 aa).

NADP(+) contacts are provided by Arg40 and Arg46. FMN contacts are provided by residues 135–137 (RAS), 256–257 (QA), Gly300, 315–319 (KPIAT), and Arg341.

The protein belongs to the chorismate synthase family. As to quaternary structure, homotetramer. It depends on FMNH2 as a cofactor.

The enzyme catalyses 5-O-(1-carboxyvinyl)-3-phosphoshikimate = chorismate + phosphate. It participates in metabolic intermediate biosynthesis; chorismate biosynthesis; chorismate from D-erythrose 4-phosphate and phosphoenolpyruvate: step 7/7. In terms of biological role, catalyzes the anti-1,4-elimination of the C-3 phosphate and the C-6 proR hydrogen from 5-enolpyruvylshikimate-3-phosphate (EPSP) to yield chorismate, which is the branch point compound that serves as the starting substrate for the three terminal pathways of aromatic amino acid biosynthesis. This reaction introduces a second double bond into the aromatic ring system. The chain is Chorismate synthase from Nocardioides sp. (strain ATCC BAA-499 / JS614).